A 390-amino-acid polypeptide reads, in one-letter code: Leu/Ile/Val-binding protein homolog 6 (390 aa).

An N-terminal signal peptide occupies residues Met1–Ala21.

This sequence belongs to the leucine-binding protein family.

Functionally, component of an amino-acid transport system. The sequence is that of Leu/Ile/Val-binding protein homolog 6 from Brucella melitensis biotype 1 (strain ATCC 23456 / CCUG 17765 / NCTC 10094 / 16M).